We begin with the raw amino-acid sequence, 83 residues long: Normal mucosa of esophagus-specific gene 1 protein (83 aa).

Belongs to the complex I NDUFA4 subunit family. As to expression, strongly expressed in vertebrae, brain, intestine and stomach.

It is found in the nucleus. This is Normal mucosa of esophagus-specific gene 1 protein (Nmes1) from Mus musculus (Mouse).